Reading from the N-terminus, the 534-residue chain is Arginine--tRNA ligase (534 aa).

Positions 120-130 match the 'HIGH' region motif; the sequence is ANPTGFLHLGH.

The protein belongs to the class-I aminoacyl-tRNA synthetase family. Monomer.

The protein localises to the cytoplasm. It carries out the reaction tRNA(Arg) + L-arginine + ATP = L-arginyl-tRNA(Arg) + AMP + diphosphate. The polypeptide is Arginine--tRNA ligase (Mesomycoplasma hyopneumoniae (strain 232) (Mycoplasma hyopneumoniae)).